A 57-amino-acid polypeptide reads, in one-letter code: Protein GnsA (57 aa).

Belongs to the gns family.

The sequence is that of Protein GnsA (gnsA) from Escherichia coli O6:H1 (strain CFT073 / ATCC 700928 / UPEC).